Reading from the N-terminus, the 364-residue chain is tRNA-specific 2-thiouridylase MnmA 1 (364 aa).

Residues Gly-10–Ser-17 and Met-36 each bind ATP. The Nucleophile role is filled by Cys-106. Residues Cys-106 and Cys-204 are joined by a disulfide bond. An ATP-binding site is contributed by Gly-130. The tract at residues Lys-154 to Gln-156 is interaction with tRNA. Cys-204 (cysteine persulfide intermediate) is an active-site residue. Residues Arg-310 to Tyr-311 form an interaction with tRNA region.

Belongs to the MnmA/TRMU family.

The protein localises to the cytoplasm. The enzyme catalyses S-sulfanyl-L-cysteinyl-[protein] + uridine(34) in tRNA + AH2 + ATP = 2-thiouridine(34) in tRNA + L-cysteinyl-[protein] + A + AMP + diphosphate + H(+). Catalyzes the 2-thiolation of uridine at the wobble position (U34) of tRNA, leading to the formation of s(2)U34. This Thermoanaerobacter sp. (strain X514) protein is tRNA-specific 2-thiouridylase MnmA 1.